A 659-amino-acid chain; its full sequence is A-type ATP synthase subunit I (659 aa).

Helical transmembrane passes span 376 to 396 (FFFG…IISA), 415 to 435 (IMLW…SYCG), 460 to 480 (MIAL…GFIV), 489 to 509 (GAIF…LFAL), 518 to 538 (LIVK…EVLA), 542 to 562 (MAVL…LSYA), 568 to 588 (ALAT…IWGI), and 590 to 610 (IASV…GHIF).

This sequence belongs to the V-ATPase 116 kDa subunit family. As to quaternary structure, has multiple subunits with at least A(3), B(3), C, D, E, F, H, I and proteolipid K(x).

Its subcellular location is the cell membrane. Functionally, component of the A-type ATP synthase that produces ATP from ADP in the presence of a proton gradient across the membrane. The protein is A-type ATP synthase subunit I of Pyrococcus horikoshii (strain ATCC 700860 / DSM 12428 / JCM 9974 / NBRC 100139 / OT-3).